The following is a 420-amino-acid chain: Diaminopimelate decarboxylase (420 aa).

The residue at position 54 (lysine 54) is an N6-(pyridoxal phosphate)lysine. Residue histidine 191 participates in substrate binding. Residues glycine 227 and 268-271 each bind pyridoxal 5'-phosphate; that span reads EPGR. Substrate-binding residues include arginine 271, arginine 307, and tyrosine 311. Cysteine 342 functions as the Proton donor in the catalytic mechanism. Substrate-binding residues include glutamate 343 and tyrosine 378. A pyridoxal 5'-phosphate-binding site is contributed by tyrosine 378.

Belongs to the Orn/Lys/Arg decarboxylase class-II family. LysA subfamily. It depends on pyridoxal 5'-phosphate as a cofactor.

The catalysed reaction is meso-2,6-diaminopimelate + H(+) = L-lysine + CO2. Its pathway is amino-acid biosynthesis; L-lysine biosynthesis via DAP pathway; L-lysine from DL-2,6-diaminopimelate: step 1/1. Is activated by 2,3-dimercaptopropan-1-ol. In terms of biological role, specifically catalyzes the decarboxylation of meso-diaminopimelate (meso-DAP) to L-lysine. Is not active against the DD- or LL-isomers of diaminopimelate. The sequence is that of Diaminopimelate decarboxylase from Escherichia coli (strain K12).